The primary structure comprises 77 residues: Acyl carrier protein (77 aa).

The Carrier domain maps to 2-77; the sequence is SDVADRVKKI…DAVKFISEAS (76 aa). O-(pantetheine 4'-phosphoryl)serine is present on serine 37.

This sequence belongs to the acyl carrier protein (ACP) family. In terms of processing, 4'-phosphopantetheine is transferred from CoA to a specific serine of apo-ACP by AcpS. This modification is essential for activity because fatty acids are bound in thioester linkage to the sulfhydryl of the prosthetic group.

The protein localises to the cytoplasm. It participates in lipid metabolism; fatty acid biosynthesis. Functionally, carrier of the growing fatty acid chain in fatty acid biosynthesis. This chain is Acyl carrier protein, found in Ruegeria pomeroyi (strain ATCC 700808 / DSM 15171 / DSS-3) (Silicibacter pomeroyi).